We begin with the raw amino-acid sequence, 243 residues long: Mesoderm posterior protein 1 (243 aa).

Positions methionine 1–lysine 86 are disordered. Residues aspartate 27–tryptophan 36 are compositionally biased toward polar residues. The region spanning glycine 76–leucine 130 is the bHLH domain. A CPLCP motif is present at residues cysteine 153 to proline 157. A disordered region spans residues alanine 204–leucine 228.

As to expression, no expression was detected in adult tissues except the testis. Expression in the testis was regulated developmentally; expressed 2 weeks after birth, and increases, reaching the full expression level in mature testes.

It is found in the nucleus. Functionally, transcription factor. Plays a role in the epithelialization of somitic mesoderm and in the development of cardiac mesoderm. Defines the rostrocaudal patterning of the somites by participating in distinct Notch pathways. In Mus musculus (Mouse), this protein is Mesoderm posterior protein 1 (Mesp1).